Consider the following 273-residue polypeptide: MSKLQDVIVQEMKVKKRIDSAEEIMELKQFIKNYVQSHSFIKSLVLGISGGQDSTLVGKLVQMSVNELREEGIDCTFIAVKLPYGVQKDADEVDQALRFIEPDEIVTVNIKPAVDQSVQSLKEAGIVLTDFQKGNEKARERMKVQFSIASNRQGIVVGTDHSAENITGFYTKYGDGAADIAPIFGLNKRQGRQLLAYLGAPKELYEKTPTADLEDDKPQLPDEDALGVTYEAIDNYLEGKPVTPEEQKVIENHYIRNAHKRELAYTRYTWPKS.

47–54 lines the ATP pocket; it reads GISGGQDS. D53 contacts Mg(2+). Residue R139 coordinates deamido-NAD(+). Residue T159 participates in ATP binding. E164 contributes to the Mg(2+) binding site. Deamido-NAD(+) contacts are provided by K172 and D179. Residues K188 and T210 each contribute to the ATP site. 259–260 is a deamido-NAD(+) binding site; the sequence is HK.

Belongs to the NAD synthetase family. In terms of assembly, homodimer.

The catalysed reaction is deamido-NAD(+) + NH4(+) + ATP = AMP + diphosphate + NAD(+) + H(+). Its pathway is cofactor biosynthesis; NAD(+) biosynthesis; NAD(+) from deamido-NAD(+) (ammonia route): step 1/1. In terms of biological role, catalyzes the ATP-dependent amidation of deamido-NAD to form NAD. Uses ammonia as a nitrogen source. This chain is NH(3)-dependent NAD(+) synthetase, found in Staphylococcus aureus (strain N315).